A 368-amino-acid chain; its full sequence is p21-activated protein kinase-interacting protein 1-like (368 aa).

5 WD repeats span residues 45 to 82 (AHTA…EHGA), 85 to 123 (HHDG…CLKT), 126 to 165 (AHKG…SAFI), 207 to 245 (AFTK…CVCE), and 248 to 289 (AHEN…IESP).

Its subcellular location is the nucleus. The protein localises to the nucleolus. Its function is as follows. Negatively regulates the PAK1 kinase. PAK1 is a member of the PAK kinase family, which has been shown to play a positive role in the regulation of signaling pathways involving MAPK8 and RELA. PAK1 exists as an inactive homodimer, which is activated by binding of small GTPases such as CDC42 to an N-terminal regulatory domain. PAK1IP1 also binds to the N-terminus of PAK1, and inhibits the specific activation of PAK1 by CDC42. May be involved in ribosomal large subunit assembly. This Danio rerio (Zebrafish) protein is p21-activated protein kinase-interacting protein 1-like (pak1ip1).